The sequence spans 503 residues: Surface lipoprotein assembly modifier (503 aa).

The first 34 residues, 1 to 34 (MTITPVYTTFTPTKTPIKFFMAGLTFLIAHISHA), serve as a signal peptide directing secretion. The N-terminal domain stretch occupies residues 38 to 220 (RTDNQEPINQ…QYRQALKQRD (183 aa)). The TPR repeat unit spans residues 136-169 (ILLGYANALAALDKGNAKKAIDELRRIIAIMPEY). Residues 221–503 (SWTWQVGMNL…QMFVEFSRIF (283 aa)) form a C-terminal probable beta barrel region. 14 beta stranded membrane-spanning segments follow: residues 222-232 (WTWQVGMNLAK), 259-270 (LSYQLGADKKWS), 275-285 (AYVGANAQIYG), 299-308 (GRLGANLGFA), 313-322 (DLSIETYGEK), 334-343 (IGIRMSVDYR), 348-358 (FQSLNAIDISR), 372-382 (TLYSTSLIYYP), 387-396 (YYLLGADFYD), 410-419 (RGIRTAWGQE), 424-434 (LSSRAQISINK), 454-463 (MQASLSLWHR), 470-479 (ITPRLTISTN), and 493-503 (NQMFVEFSRIF).

This sequence belongs to the Slam family.

It localises to the cell outer membrane. Its function is as follows. Required for correct export to the cell surface of some cell outer membrane lipoproteins (tested with TpbP) upon heterologous expression in E.coli and probably also in Moraxella. The sequence is that of Surface lipoprotein assembly modifier from Moraxella catarrhalis (Branhamella catarrhalis).